A 456-amino-acid polypeptide reads, in one-letter code: Antizyme inhibitor 2 (456 aa).

C357 acts as the Proton donor; shared with dimeric partner in catalysis.

This sequence belongs to the Orn/Lys/Arg decarboxylase class-II family. ODC antizyme inhibitor subfamily. Monomer. Interacts with OAZ1; this interaction disrupts the interaction between the antizyme and ODC1. Does not form a heterodimer with ODC1.

The protein resides in the nucleus. It is found in the cytoplasm. The protein localises to the perinuclear region. Its subcellular location is the membrane. It localises to the cytoplasmic vesicle. The protein resides in the endoplasmic reticulum-Golgi intermediate compartment. It is found in the golgi apparatus. The protein localises to the cis-Golgi network. Its subcellular location is the trans-Golgi network. It localises to the cytoplasmic granule. The protein resides in the cell projection. It is found in the axon. The protein localises to the dendrite. Its subcellular location is the perikaryon. In terms of biological role, antizyme inhibitor (AZI) protein that positively regulates ornithine decarboxylase (ODC) activity and polyamine uptake. AZI is an enzymatically inactive ODC homolog that counteracts the negative effect of ODC antizyme (AZ) on ODC activity by competing with ODC for antizyme-binding. Inhibits antizyme-dependent ODC degradation and releases ODC monomers from their inactive complex with antizymes, leading to formation of the catalytically active ODC homodimer and restoring polyamine production. Participates in the morphological integrity of the trans-Golgi network (TGN) and functions as a regulator of intracellular secretory vesicle trafficking. The protein is Antizyme inhibitor 2 (azin2) of Xenopus laevis (African clawed frog).